The following is a 178-amino-acid chain: Large ribosomal subunit protein uL6 (178 aa).

The protein belongs to the universal ribosomal protein uL6 family. As to quaternary structure, part of the 50S ribosomal subunit.

Functionally, this protein binds to the 23S rRNA, and is important in its secondary structure. It is located near the subunit interface in the base of the L7/L12 stalk, and near the tRNA binding site of the peptidyltransferase center. In Helicobacter hepaticus (strain ATCC 51449 / 3B1), this protein is Large ribosomal subunit protein uL6.